The sequence spans 126 residues: Profilin (126 aa).

The protein belongs to the profilin family. As to quaternary structure, occurs in many kinds of cells as a complex with monomeric actin in a 1:1 ratio.

The protein localises to the cytoplasm. Its subcellular location is the cytoskeleton. Its function is as follows. Binds to actin and affects the structure of the cytoskeleton. At high concentrations, profilin prevents the polymerization of actin, whereas it enhances it at low concentrations. By binding to PIP2, it inhibits the formation of IP3 and DG. The protein is Profilin (PFY1) of Saccharomyces cerevisiae (strain ATCC 204508 / S288c) (Baker's yeast).